Consider the following 566-residue polypeptide: Rho GTPase-activating protein gacH (566 aa).

Disordered stretches follow at residues 1–56 (MSGV…SGAT), 65–84 (LLKQ…NNNK), 128–168 (SEDE…SAHS), and 322–366 (KPQV…NSKN). The segment covering 14–35 (SSTTATTTGSSKSSLNISKSVS) has biased composition (low complexity). The span at 36-56 (PTGNKAVSPMSSPNSLQSGAT) shows a compositional bias: polar residues. Positions 65–83 (LLKQQQQPNHSITTNNNNN) are enriched in low complexity. The segment covering 130–141 (DEYEDDEDEDEN) has biased composition (acidic residues). The segment covering 142–160 (NNSVNNNSNNNSNNNNNNN) has biased composition (low complexity). The span at 327–337 (KSPQSSGSLST) shows a compositional bias: polar residues. Positions 345-356 (SSSLQRSRSVSQ) are enriched in low complexity. The Rho-GAP domain occupies 369 to 564 (GSLDTILEKE…LLIENYNLFY (196 aa)).

The protein localises to the cytoplasm. In terms of biological role, rho GTPase-activating protein involved in the signal transduction pathway. This chain is Rho GTPase-activating protein gacH (gacH), found in Dictyostelium discoideum (Social amoeba).